Reading from the N-terminus, the 365-residue chain is Holliday junction branch migration complex subunit RuvB (365 aa).

Positions 1-191 (MNFDPIDDFD…FGFTAHMDFY (191 aa)) are large ATPase domain (RuvB-L). Residues leucine 30, arginine 31, glycine 72, lysine 75, threonine 76, serine 77, 138 to 140 (EDF), arginine 181, tyrosine 191, and arginine 228 each bind ATP. Threonine 76 serves as a coordination point for Mg(2+). Residues 192–262 (EPEELQQILM…VAQAALAVYD (71 aa)) are small ATPAse domain (RuvB-S). The tract at residues 265 to 365 (QLGLDRLDRS…QATLFDPNGE (101 aa)) is head domain (RuvB-H). Positions 320 and 325 each coordinate DNA.

It belongs to the RuvB family. In terms of assembly, homohexamer. Forms an RuvA(8)-RuvB(12)-Holliday junction (HJ) complex. HJ DNA is sandwiched between 2 RuvA tetramers; dsDNA enters through RuvA and exits via RuvB. An RuvB hexamer assembles on each DNA strand where it exits the tetramer. Each RuvB hexamer is contacted by two RuvA subunits (via domain III) on 2 adjacent RuvB subunits; this complex drives branch migration. In the full resolvosome a probable DNA-RuvA(4)-RuvB(12)-RuvC(2) complex forms which resolves the HJ.

The protein resides in the cytoplasm. It catalyses the reaction ATP + H2O = ADP + phosphate + H(+). In terms of biological role, the RuvA-RuvB-RuvC complex processes Holliday junction (HJ) DNA during genetic recombination and DNA repair, while the RuvA-RuvB complex plays an important role in the rescue of blocked DNA replication forks via replication fork reversal (RFR). RuvA specifically binds to HJ cruciform DNA, conferring on it an open structure. The RuvB hexamer acts as an ATP-dependent pump, pulling dsDNA into and through the RuvAB complex. RuvB forms 2 homohexamers on either side of HJ DNA bound by 1 or 2 RuvA tetramers; 4 subunits per hexamer contact DNA at a time. Coordinated motions by a converter formed by DNA-disengaged RuvB subunits stimulates ATP hydrolysis and nucleotide exchange. Immobilization of the converter enables RuvB to convert the ATP-contained energy into a lever motion, pulling 2 nucleotides of DNA out of the RuvA tetramer per ATP hydrolyzed, thus driving DNA branch migration. The RuvB motors rotate together with the DNA substrate, which together with the progressing nucleotide cycle form the mechanistic basis for DNA recombination by continuous HJ branch migration. Branch migration allows RuvC to scan DNA until it finds its consensus sequence, where it cleaves and resolves cruciform DNA. This Rhodococcus erythropolis (strain PR4 / NBRC 100887) protein is Holliday junction branch migration complex subunit RuvB.